Reading from the N-terminus, the 354-residue chain is CCN family member 3 (354 aa).

A signal peptide spans 1–21 (MSLFLRKRCLCLGFLLFHLLS). The IGFBP N-terminal domain maps to 25–99 (ASLRCPSRCP…NNQTGICMVP (75 aa)). Intrachain disulfides connect Cys29-Cys55, Cys33-Cys57, Cys37-Cys58, Cys44-Cys61, Cys69-Cys83, and Cys75-Cys96. Asn91 is a glycosylation site (N-linked (GlcNAc...) asparagine). The 67-residue stretch at 102-168 (DNCVFDGVIY…GECCEKWTCG (67 aa)) folds into the VWFC domain. The TSP type-1 domain maps to 202–247 (NCIEQTTEWSACSKSCGMGVSTRVTNRNRQCEMVKQTRLCIVRPCE). The S-palmitoyl cysteine moiety is linked to residue Cys241. Disulfide bonds link Cys261/Cys298, Cys278/Cys312, Cys289/Cys328, Cys292/Cys330, and Cys297/Cys334. The CTCK domain maps to 261–335 (CLRTKKSLKA…GTCTCYSNCP (75 aa)). The N-linked (GlcNAc...) asparagine glycan is linked to Asn277.

It belongs to the CCN family. As to quaternary structure, interacts with FBLN1. Interacts (via CTCK domain) with NOTCH1 (via the EGF-like repeat region). Interacts with GJA1/CX43. Interacts with ITGA5:ITGB1, ITGAV:ITGB3 and ITGAV:ITGB5. Interacts with ZDHHC22; the interaction may lead to CCN3 palmitoylation. May be palmitoylated on Cys-241, which is important for extracellular secretion. In terms of tissue distribution, expressed in large vessels including the ascending aorta, carotid arteries, and the thoracic aorta, in medium-sized vessels such as coronary arteries and small pulmonary veins and also in small vessels. In addition, also found to be present in the heart (at protein level). Expressed in astrocytes (at protein level). Detected in brain, bone, lung and muscle tissues. Expressed in skin, expression highly increases 5 days post-wounding, peaking on the 7th day to decline after 9 days. Expressed in pancreatic ducts and beta-cell islets. Expressed in the brain, in arcuate nucleus ESR1/KISS1 neurons, during lactation (at protein level).

Its subcellular location is the secreted. It localises to the cytoplasm. The protein localises to the cell junction. It is found in the gap junction. Its function is as follows. Immediate-early protein playing a role in various cellular processes including proliferation, adhesion, migration, differentiation and survival. Acts by binding to integrins or membrane receptors such as NOTCH1. Essential regulator of hematopoietic stem and progenitor cell function. Inhibits myogenic differentiation through the activation of Notch-signaling pathway. Inhibits vascular smooth muscle cells proliferation by increasing expression of cell-cycle regulators such as CDKN2B or CDKN1A independently of TGFB1 signaling. Ligand of integrins ITGAV:ITGB3 and ITGA5:ITGB1, acts directly upon endothelial cells to stimulate pro-angiogenic activities and induces angiogenesis. In endothelial cells, supports cell adhesion, induces directed cell migration (chemotaxis) and promotes cell survival. Also plays a role in cutaneous wound healing acting as integrin receptor ligand. Supports skin fibroblast adhesion through ITGA5:ITGB1 and ITGA6:ITGB1 and induces fibroblast chemotaxis through ITGAV:ITGB5. Seems to enhance bFGF-induced DNA synthesis in fibroblasts. Involved in bone regeneration as a negative regulator. Enhances the articular chondrocytic phenotype, whereas it repressed the one representing endochondral ossification. Impairs pancreatic beta-cell function, inhibits beta-cell proliferation and insulin secretion. Plays a role as negative regulator of endothelial pro-inflammatory activation reducing monocyte adhesion, its anti-inflammatory effects occur secondary to the inhibition of NF-kappaB signaling pathway. Contributes to the control and coordination of inflammatory processes in atherosclerosis. Attenuates inflammatory pain through regulation of IL1B- and TNF-induced MMP9, MMP2 and CCL2 expression. Inhibits MMP9 expression through ITGB1 engagement. Brain osteoanabolic hormone. During lactation, maintains the maternal skeleton and viability of offspring. In this context, may act on osteochondral skeletal stem cells. The polypeptide is CCN family member 3 (Ccn3) (Mus musculus (Mouse)).